Here is a 1466-residue protein sequence, read N- to C-terminus: MSHRHHAALVASASGRSPSWGSAISQSFRQVEAEDPFRRAQSMRGHDEEEEDLRWAALEKLPTYDRMRRGVVRSALLRDGDDDHKDDDDAGTGKAVELVDIGRLATGDAARALVERLLQDDSERFLRRLRDRIDMVGIELPKIEIRYEELSVQADAFVASRALPTLSNSAINFLQGLIGQFGSSNKKTINILKQVNGILKSSRMTLLLGPPSSGKSTLMRALTGKLDKNLKVFGNITYCGHKFSEFYPERTSAYVSQYDLHNAEMTVRETLDFSRWCLGIGSRYDMLTEISRRERNAGIKPDPEIDAFMKATAMQGQETNIITDLILKVLGLDICADTIVGDEMIRGISGGQMKRVTTGEMLTGPARALLMDEISTGLDSSSTFHIVKFIRHLVHIMNETVMISLLQPPPETYNLFDDIVLLSEGYIVYHGPRENILEFFEASGFRCPQRKAVADFLQEVTSKKDQQQYWFLDKEPYCYVSVPEFAERFKSFYIGQQMMKEQHIPFEKSKIHPAALTTMKNALSNWESLKAVLCREKLLMKRNSFLYIFKVTQLIILAFLSMTVFLRTKMPHGQFSDGTKFLGALTFNLITVMFNGLSELNLTVKKLPVFYKHRDFLFFPPWTFGVANILIKVPVSLVEATVWVVITYYVMGFAPAAGRFFRQFLAFFVTHLMAMALFRFLGAILQTMVIAISFGMLVLLIVFVFGGFVIRKNDIRPWWIWCYWASPMMYSQNAISINEFLASRWAIPNNDTTIDAKTVGEAILKSKGLFTGEWGFWLSIGALVGFIILFNTLYILALTYLSPIRSANALVIDEHNETELYTETRNEEHRSRTSTTTSSIPTSANGEGNRPTQSQFVLPFQPLSLCFNHLNYYVDMPSEMKQQGLMESRLQLLSDISGAFRPGLLTALVGVSGAGKTTLMDVLAGRKTSGTIEGSITLSGYSKKQETFARISGYCEQADIHSPNVTVYESILYSAWLRLPSDVDSNTRKMFVEEVMALVELDVLCNAMVGLPGVSGLSTEQRKRLTIAVELVANPSIIFMDEPTSGLDARAAAIVMRTVRNTVNTGRTVVCTIHQPSIDIFESFDELLLLKRGGRVIYAGELGDHSHKLVEYFETILGVPSITEGYNPATWMLEVSSTLEEARMNVDFAEIYANSLLYRKNQELIEELSIPPPGYRDLLFATKYSQSFYIQCVANLWKQYKSYWKNPSYNSLRYLTTFLYGLFFGTVFWQKGTKLDSQQDLYNLLGATYAAIFFIGATNCMSVQPVVSIERAVYYRESAAGMYSPLSYAFAQASVEFIYNIIQGILYTVIIYAMIGYDWKASKFFYFLFFIVSSFNYFTFFGMMLVACTPSALLANILITFALPLWNLFAGFLIFRKAIPIWWRWYYWANPVSWTIYGVIASQFGGNGGSISVPGGSHVAMSQILEDNVGVRHDFLGYVILAHFGFMAAFVLIFGYSIKFLNFQKR.

The disordered stretch occupies residues 1–21 (MSHRHHAALVASASGRSPSWG). An ABC transporter 1 domain is found at 176–449 (GLIGQFGSSN…FEASGFRCPQ (274 aa)). 209–216 (GPPSSGKS) contacts ATP. An ABC transmembrane type-2 1 domain is found at 527–740 (ESLKAVLCRE…SQNAISINEF (214 aa)). 6 consecutive transmembrane segments (helical) span residues 545 to 565 (FLYI…MTVF), 581 to 601 (FLGA…SELN), 633 to 653 (VPVS…VMGF), 664 to 684 (FLAF…LGAI), 690 to 710 (IAIS…GFVI), and 776 to 796 (FWLS…LYIL). Residues 821 to 831 (YTETRNEEHRS) are compositionally biased toward basic and acidic residues. The interval 821–851 (YTETRNEEHRSRTSTTTSSIPTSANGEGNRP) is disordered. Positions 833 to 843 (TSTTTSSIPTS) are enriched in low complexity. The ABC transporter 2 domain occupies 865 to 1117 (LCFNHLNYYV…KLVEYFETIL (253 aa)). Residue 910-917 (GVSGAGKT) participates in ATP binding. In terms of domain architecture, ABC transmembrane type-2 2 spans 1190–1404 (IQCVANLWKQ…TIYGVIASQF (215 aa)). The next 7 membrane-spanning stretches (helical) occupy residues 1209–1229 (YNSL…TVFW), 1241–1261 (LYNL…TNCM), 1297–1317 (FIYN…MIGY), 1327–1347 (FLFF…MLVA), 1355–1375 (ANIL…FLIF), 1396–1416 (IYGV…VPGG), and 1435–1455 (FLGY…LIFG).

It belongs to the ABC transporter superfamily. ABCG family. PDR (TC 3.A.1.205) subfamily.

Its subcellular location is the membrane. The protein is ABC transporter G family member 40 of Oryza sativa subsp. japonica (Rice).